A 265-amino-acid chain; its full sequence is HTH-type transcriptional activator CfaD (265 aa).

The HTH araC/xylS-type domain occupies 164–261; the sequence is DKVRNVIEKD…GVTPKQFFTY (98 aa). 2 DNA-binding regions (H-T-H motif) span residues 181 to 202 and 228 to 251; these read GIIADAFNVSEITIRKRLESEN and ISQISNMIGISSASYFIRVFNKHY.

As to quaternary structure, homodimer.

Functionally, transcriptional activator of the CFA/I adhesin (cfaA and cfaB) genes of enterotoxigenic E.coli at 37 degrees Celsius. Also represses the silencing effect of H-NS (hns). The polypeptide is HTH-type transcriptional activator CfaD (Escherichia coli).